The sequence spans 315 residues: L-lactate dehydrogenase (315 aa).

NAD(+) is bound by residues Val-17, Asp-38, Lys-43, Tyr-69, and 83 to 84 (GA). Residues Gln-86, Arg-92, and 124–127 (NPVD) each bind substrate. NAD(+)-binding positions include 122 to 124 (ATN) and Ser-147. A substrate-binding site is contributed by 152 to 155 (DTAR). Beta-D-fructose 1,6-bisphosphate is bound by residues Arg-157 and His-172. The active-site Proton acceptor is His-179. Tyr-224 carries the phosphotyrosine modification. Thr-233 contacts substrate.

This sequence belongs to the LDH/MDH superfamily. LDH family. As to quaternary structure, homotetramer.

The protein resides in the cytoplasm. The enzyme catalyses (S)-lactate + NAD(+) = pyruvate + NADH + H(+). It participates in fermentation; pyruvate fermentation to lactate; (S)-lactate from pyruvate: step 1/1. Its activity is regulated as follows. Allosterically activated by fructose 1,6-bisphosphate (FBP). In terms of biological role, catalyzes the conversion of lactate to pyruvate. The sequence is that of L-lactate dehydrogenase from Bacillus pumilus (strain SAFR-032).